The chain runs to 505 residues: Cytochrome P450 CYP71D313 (505 aa).

The helical transmembrane segment at 1-21 (MELQFPLFSIFFVTILFFFLF) threads the bilayer. Cys441 lines the heme pocket. Residues 442–462 (PGIAFGIATIELPLALLLYHF) form a helical membrane-spanning segment.

This sequence belongs to the cytochrome P450 family. The cofactor is heme.

The protein resides in the membrane. Its function is as follows. Probable heme-thiolate monooxygenase. The sequence is that of Cytochrome P450 CYP71D313 from Panax ginseng (Korean ginseng).